Here is a 476-residue protein sequence, read N- to C-terminus: Dihydrolipoyl dehydrogenase (476 aa).

Residues 36–45, K54, and A117 each bind FAD; that span reads EHQERLGGVC. C45 and C50 form a disulfide bridge. Residues 182–186, D205, V238, and 271–274 each bind NAD(+); these read GGGII and AIGR. Positions 314 and 322 each coordinate FAD. H446 (proton acceptor) is an active-site residue.

This sequence belongs to the class-I pyridine nucleotide-disulfide oxidoreductase family. As to quaternary structure, homodimer. Requires FAD as cofactor.

Its subcellular location is the cytoplasm. It catalyses the reaction N(6)-[(R)-dihydrolipoyl]-L-lysyl-[protein] + NAD(+) = N(6)-[(R)-lipoyl]-L-lysyl-[protein] + NADH + H(+). Lipoamide dehydrogenase is a component of the alpha-ketoacid dehydrogenase complexes. This chain is Dihydrolipoyl dehydrogenase (lpdA), found in Buchnera aphidicola subsp. Schizaphis graminum (strain Sg).